A 123-amino-acid chain; its full sequence is Large ribosomal subunit protein bL12 (123 aa).

This sequence belongs to the bacterial ribosomal protein bL12 family. Homodimer. Part of the ribosomal stalk of the 50S ribosomal subunit. Forms a multimeric L10(L12)X complex, where L10 forms an elongated spine to which 2 to 4 L12 dimers bind in a sequential fashion. Binds GTP-bound translation factors.

Functionally, forms part of the ribosomal stalk which helps the ribosome interact with GTP-bound translation factors. Is thus essential for accurate translation. The protein is Large ribosomal subunit protein bL12 of Geobacillus thermodenitrificans (strain NG80-2).